A 37-amino-acid chain; its full sequence is Large ribosomal subunit protein bL36 (37 aa).

This sequence belongs to the bacterial ribosomal protein bL36 family.

The polypeptide is Large ribosomal subunit protein bL36 (Staphylococcus aureus (strain Mu3 / ATCC 700698)).